The chain runs to 20 residues: Pregnancy-associated glycoprotein 57 (20 aa).

Belongs to the peptidase A1 family. Glycosylated.

Its subcellular location is the secreted. This chain is Pregnancy-associated glycoprotein 57, found in Ovis aries (Sheep).